Here is a 77-residue protein sequence, read N- to C-terminus: U8-lycotoxin-Ls1l (77 aa).

An N-terminal signal peptide occupies residues 1-20 (MKLMIFTGLVLFAIVSLIEA). The propeptide occupies 21-26 (QAENEK).

It belongs to the neurotoxin 19 (CSTX) family. 08 (U8-Lctx) subfamily. Contains 4 disulfide bonds. In terms of tissue distribution, expressed by the venom gland.

The protein localises to the secreted. The chain is U8-lycotoxin-Ls1l from Lycosa singoriensis (Wolf spider).